The chain runs to 99 residues: METLTFEFPAGAPARGRALAGCVGSGDLEVLLEPAAGGALSIQVVTSVNGSGPRWQQLFARVFAAPTAPAASIRIHDFGATPGVVRLRLEQALEEAGHD.

An O-(phosphoribosyl dephospho-coenzyme A)serine modification is found at Ser25.

The protein belongs to the MdcC family. Covalently binds the prosthetic group of malonate decarboxylase.

It is found in the cytoplasm. Subunit of malonate decarboxylase, it is an acyl carrier protein to which acetyl and malonyl thioester residues are bound via a 2'-(5''-phosphoribosyl)-3'-dephospho-CoA prosthetic group and turn over during the catalytic mechanism. The chain is Malonate decarboxylase acyl carrier protein from Pseudomonas aeruginosa (strain LESB58).